The following is a 180-amino-acid chain: MEMIKTLYVTGYRSFELGIFQGKDPKITVIKNVLKKELASYIETGVEWILISGNLGVELWTAEVVGELKTEYPEVQLGLLYPFKDFGNNWNEQNRELLTKAESLADYINSVSHQPYQSPAQLKMHTKFLLEHSGGSLLIYDKEYPGKTEYFLKDAQHFSEREPYDIRLITMDDLQNSVID.

The protein belongs to the UPF0398 family.

This is UPF0398 protein EF_1150 from Enterococcus faecalis (strain ATCC 700802 / V583).